A 513-amino-acid chain; its full sequence is Activin receptor type-2A (513 aa).

The signal sequence occupies residues 1-19 (MGAAAKLAFAVFLISCSSG). Over 20 to 135 (AILGRSETQE…TSNPVTPKPP (116 aa)) the chain is Extracellular. 5 disulfide bridges follow: Cys-30/Cys-60, Cys-50/Cys-78, Cys-85/Cys-104, Cys-91/Cys-103, and Cys-105/Cys-110. Residues Asn-43 and Asn-66 are each glycosylated (N-linked (GlcNAc...) asparagine). Residues 136 to 161 (YYNILLYSLVPLMLVAGIVICAFWVY) form a helical membrane-spanning segment. Residues 162–513 (RHHKMAYPPV…VDFPPKESSL (352 aa)) lie on the Cytoplasmic side of the membrane. Residues 192 to 485 (LQLLEVKARG…GERITQMQRL (294 aa)) form the Protein kinase domain. Residues 198–206 (KARGGFGCV) and Lys-219 contribute to the ATP site. The Proton acceptor role is filled by Asp-322.

It belongs to the protein kinase superfamily. TKL Ser/Thr protein kinase family. TGFB receptor subfamily. In terms of assembly, part of a complex consisting of MAGI2/ARIP1, ACVR2A, ACVR1B and SMAD3. Interacts with MAGI2/ARIP1. Interacts with type I receptor ACVR1. Interacts with TSC22D1/TSC-22. Interacts with activin A/INHBA. It depends on Mg(2+) as a cofactor. Mn(2+) serves as cofactor.

The protein resides in the cell membrane. It catalyses the reaction L-threonyl-[receptor-protein] + ATP = O-phospho-L-threonyl-[receptor-protein] + ADP + H(+). The enzyme catalyses L-seryl-[receptor-protein] + ATP = O-phospho-L-seryl-[receptor-protein] + ADP + H(+). Its function is as follows. On ligand binding, forms a receptor complex consisting of two type II and two type I transmembrane serine/threonine kinases. Type II receptors phosphorylate and activate type I receptors which autophosphorylate, then bind and activate SMAD transcriptional regulators. Receptor for activin A, activin B and inhibin A. Mediates induction of adipogenesis by GDF6. This Ovis aries (Sheep) protein is Activin receptor type-2A (ACVR2A).